We begin with the raw amino-acid sequence, 443 residues long: Xaa-Pro dipeptidase (443 aa).

Positions 241, 252, 333, 378, and 417 each coordinate Mn(2+).

This sequence belongs to the peptidase M24B family. Bacterial-type prolidase subfamily. Mn(2+) serves as cofactor.

The enzyme catalyses Xaa-L-Pro dipeptide + H2O = an L-alpha-amino acid + L-proline. In terms of biological role, splits dipeptides with a prolyl residue in the C-terminal position. This chain is Xaa-Pro dipeptidase, found in Actinobacillus pleuropneumoniae serotype 5b (strain L20).